The sequence spans 299 residues: 4-sulfomuconolactone hydrolase (299 aa).

Belongs to the metallo-dependent hydrolases superfamily. Sulfomuconolactone hydrolase family. In terms of assembly, monomer. Zn(2+) serves as cofactor.

The catalysed reaction is 4-sulfomuconolactone + H2O = maleylacetate + sulfite + 2 H(+). Functionally, involved in the degradation of 4-sulfocatechol which is a central intermediate in the degradation of substituted sulfonated benzenes. Catalyzes the hydrolytical desulfonation of 4-sulfomuconolactone to yield maleylacetate. In Rhizobium radiobacter (Agrobacterium tumefaciens), this protein is 4-sulfomuconolactone hydrolase.